The following is a 238-amino-acid chain: Ribonuclease PH (238 aa).

Phosphate contacts are provided by residues arginine 86 and 124–126; that span reads GTR.

Belongs to the RNase PH family. As to quaternary structure, homohexameric ring arranged as a trimer of dimers.

It catalyses the reaction tRNA(n+1) + phosphate = tRNA(n) + a ribonucleoside 5'-diphosphate. In terms of biological role, phosphorolytic 3'-5' exoribonuclease that plays an important role in tRNA 3'-end maturation. Removes nucleotide residues following the 3'-CCA terminus of tRNAs; can also add nucleotides to the ends of RNA molecules by using nucleoside diphosphates as substrates, but this may not be physiologically important. Probably plays a role in initiation of 16S rRNA degradation (leading to ribosome degradation) during starvation. This chain is Ribonuclease PH, found in Mesorhizobium japonicum (strain LMG 29417 / CECT 9101 / MAFF 303099) (Mesorhizobium loti (strain MAFF 303099)).